The primary structure comprises 252 residues: MKICLVDETGAGDGALSVLAARWGLEHDENNPMALVLTTAHLELRKRDEPKLGGIFVDFVGGAMAHRRKFGGGRGEAVAKAVGIKGDYLPDVVDATAGLGRDAFVLASVGCRVRMLERNPVVAALLDDGLARGYADPEIGPWLQERLQLIHASSLTALTDITPRPQVVYLDPMFPHKQKSALVKKEMRVFQSLVGPDLDADGLLAPARQLATKRVVVKRPDYAPPLADIATPNAVVTKGHRFDIYTGTALVE.

S-adenosyl-L-methionine-binding positions include 101–102 (RD), 117–118 (ER), 153–154 (SS), and Asp171.

The protein belongs to the methyltransferase superfamily. RsmJ family.

It localises to the cytoplasm. It catalyses the reaction guanosine(1516) in 16S rRNA + S-adenosyl-L-methionine = N(2)-methylguanosine(1516) in 16S rRNA + S-adenosyl-L-homocysteine + H(+). Functionally, specifically methylates the guanosine in position 1516 of 16S rRNA. The sequence is that of Ribosomal RNA small subunit methyltransferase J from Citrobacter koseri (strain ATCC BAA-895 / CDC 4225-83 / SGSC4696).